Consider the following 158-residue polypeptide: uncharacterized protein (158 aa).

The next 3 helical transmembrane spans lie at 45–65, 76–96, and 106–126; these read GIFFQVVGAILVFGAYLPAVI, LAIGMWIISIAGLGLLAIFAW, and FILVALSETLSCIASIIVFAL.

This sequence to U.parvum UU007, UU041 and UU042.

The protein resides in the cell membrane. This is an uncharacterized protein from Ureaplasma parvum serovar 3 (strain ATCC 700970).